A 211-amino-acid chain; its full sequence is Large ribosomal subunit protein uL3 (211 aa).

The disordered stretch occupies residues 135-155 (THGNSLSHRAPGSIGQNQSPG). Residue Q152 is modified to N5-methylglutamine.

It belongs to the universal ribosomal protein uL3 family. In terms of assembly, part of the 50S ribosomal subunit. Forms a cluster with proteins L14 and L19. Post-translationally, methylated by PrmB.

In terms of biological role, one of the primary rRNA binding proteins, it binds directly near the 3'-end of the 23S rRNA, where it nucleates assembly of the 50S subunit. The protein is Large ribosomal subunit protein uL3 of Pseudoalteromonas translucida (strain TAC 125).